Reading from the N-terminus, the 166-residue chain is Sperm-egg fusion protein TMEM95 (166 aa).

Residues Met-1–Ala-16 form the signal peptide. Cystine bridges form between Cys-17/Cys-118, Cys-20/Cys-121, Cys-105/Cys-128, and Cys-109/Cys-134. At Cys-17–Arg-145 the chain is on the extracellular side. Residue Asn-117 is glycosylated (N-linked (GlcNAc...) asparagine). A helical transmembrane segment spans residues Ile-146 to Val-165. Residue Glu-166 is a topological domain, cytoplasmic.

This sequence belongs to the TMEM95 family. In terms of assembly, does not interact with sperm-egg fusion proteins IZUMO1 or IZUMO1R/JUNO. In terms of processing, N-glycosylated. In terms of tissue distribution, detected in testis and brain with higher levels in brain than testis.

It localises to the cytoplasmic vesicle. The protein resides in the secretory vesicle. It is found in the acrosome membrane. Sperm protein required for fusion of sperm with the egg membrane during fertilization. The sequence is that of Sperm-egg fusion protein TMEM95 from Bos taurus (Bovine).